Reading from the N-terminus, the 582-residue chain is Protein bps2 (582 aa).

28–35 provides a ligand contact to ATP; the sequence is APNAYGKT. Positions 243–281 form a coiled coil; that stretch reads RQSYERQLQEINAQLQKITAQRNEAEIEIRLLEKVLDQI. One can recognise a Zinc-hook domain in the interval 243 to 351; the sequence is RQSYERQLQE…KLKELDQISS (109 aa). The Zn(2+) site is built by Cys292 and Cys295. Positions 320–351 form a coiled coil; it reads SLYAGIKKEADELLSKKSEIEKKLKELDQISS.

The sequence is that of Protein bps2 (bps2) from Acidianus ambivalens (Desulfurolobus ambivalens).